A 185-amino-acid polypeptide reads, in one-letter code: Large ribosomal subunit protein uL5 (185 aa).

It belongs to the universal ribosomal protein uL5 family. Part of the 50S ribosomal subunit; part of the 5S rRNA/L5/L18/L25 subcomplex. Contacts the 5S rRNA and the P site tRNA. Forms a bridge to the 30S subunit in the 70S ribosome.

Its function is as follows. This is one of the proteins that bind and probably mediate the attachment of the 5S RNA into the large ribosomal subunit, where it forms part of the central protuberance. In the 70S ribosome it contacts protein S13 of the 30S subunit (bridge B1b), connecting the 2 subunits; this bridge is implicated in subunit movement. Contacts the P site tRNA; the 5S rRNA and some of its associated proteins might help stabilize positioning of ribosome-bound tRNAs. In Parvibaculum lavamentivorans (strain DS-1 / DSM 13023 / NCIMB 13966), this protein is Large ribosomal subunit protein uL5.